A 288-amino-acid chain; its full sequence is Keratin-associated protein 5-4 (288 aa).

Repeat copies occupy residues cysteine 49–proline 52, cysteine 55–proline 58, cysteine 61–proline 64, cysteine 201–proline 204, cysteine 220–proline 223, cysteine 239–proline 242, cysteine 249–proline 252, cysteine 268–proline 271, and cysteine 278–proline 281. The 9 X 4 AA repeats of C-C-X-P stretch occupies residues cysteine 49–proline 281.

This sequence belongs to the KRTAP type 5 family. Interacts with hair keratins. In terms of tissue distribution, restricted to hair root, not detected in any other tissues.

In terms of biological role, in the hair cortex, hair keratin intermediate filaments are embedded in an interfilamentous matrix, consisting of hair keratin-associated protein (KRTAP), which are essential for the formation of a rigid and resistant hair shaft through their extensive disulfide bond cross-linking with abundant cysteine residues of hair keratins. The matrix proteins include the high-sulfur and high-glycine-tyrosine keratins. This is Keratin-associated protein 5-4 (KRTAP5-4) from Homo sapiens (Human).